Reading from the N-terminus, the 278-residue chain is MTTLGTPVSLGRRTRTGRLELEFGVRHGQTALLRDLQKAPLMVVRPFRLPCGTLMVFIVNPTGGVLGGDHSEIHVEAGAGTRVLILTQSATRVQPSPGGEWATQELHFHVGVGARLEYYPERTLPFAGSRFRQHLRADLGAGAEFGLLETLASGRVQMGERLAWADYRSEVSVYAAQERVYLDRQHFRPGPHSRAPGVLGGNDYFASGVWVAGDSAAGRPAAESPTTAPGWASGLSAGGAVWARGVAATGPALDHAARQLREQVRHDLFGAAPLVLRR.

This sequence belongs to the UreD family. In terms of assembly, ureD, UreF and UreG form a complex that acts as a GTP-hydrolysis-dependent molecular chaperone, activating the urease apoprotein by helping to assemble the nickel containing metallocenter of UreC. The UreE protein probably delivers the nickel.

It localises to the cytoplasm. Its function is as follows. Required for maturation of urease via the functional incorporation of the urease nickel metallocenter. The chain is Urease accessory protein UreD from Deinococcus radiodurans (strain ATCC 13939 / DSM 20539 / JCM 16871 / CCUG 27074 / LMG 4051 / NBRC 15346 / NCIMB 9279 / VKM B-1422 / R1).